Consider the following 224-residue polypeptide: Ribosomal RNA large subunit methyltransferase E (224 aa).

S-adenosyl-L-methionine is bound by residues Gly-60, Trp-62, Asp-93, Asp-109, and Asp-137. The active-site Proton acceptor is the Lys-177.

It belongs to the class I-like SAM-binding methyltransferase superfamily. RNA methyltransferase RlmE family.

It localises to the cytoplasm. The catalysed reaction is uridine(2552) in 23S rRNA + S-adenosyl-L-methionine = 2'-O-methyluridine(2552) in 23S rRNA + S-adenosyl-L-homocysteine + H(+). In terms of biological role, specifically methylates the uridine in position 2552 of 23S rRNA at the 2'-O position of the ribose in the fully assembled 50S ribosomal subunit. This is Ribosomal RNA large subunit methyltransferase E from Polynucleobacter asymbioticus (strain DSM 18221 / CIP 109841 / QLW-P1DMWA-1) (Polynucleobacter necessarius subsp. asymbioticus).